Reading from the N-terminus, the 864-residue chain is Leucine--tRNA ligase (864 aa).

A 'HIGH' region motif is present at residues 42-52 (PYPSGKLHMGH). The 'KMSKS' region motif lies at 624-628 (KMSKS). ATP is bound at residue Lys-627.

This sequence belongs to the class-I aminoacyl-tRNA synthetase family.

Its subcellular location is the cytoplasm. The catalysed reaction is tRNA(Leu) + L-leucine + ATP = L-leucyl-tRNA(Leu) + AMP + diphosphate. This is Leucine--tRNA ligase from Burkholderia thailandensis (strain ATCC 700388 / DSM 13276 / CCUG 48851 / CIP 106301 / E264).